We begin with the raw amino-acid sequence, 509 residues long: 2,3-bisphosphoglycerate-independent phosphoglycerate mutase (509 aa).

Residues D12 and S62 each coordinate Mn(2+). S62 functions as the Phosphoserine intermediate in the catalytic mechanism. Substrate-binding positions include H123, 153 to 154 (RD), R185, R191, 260 to 263 (RPDR), and K333. Positions 400, 404, 441, 442, and 460 each coordinate Mn(2+).

It belongs to the BPG-independent phosphoglycerate mutase family. In terms of assembly, monomer. Mn(2+) serves as cofactor.

The catalysed reaction is (2R)-2-phosphoglycerate = (2R)-3-phosphoglycerate. It functions in the pathway carbohydrate degradation; glycolysis; pyruvate from D-glyceraldehyde 3-phosphate: step 3/5. Catalyzes the interconversion of 2-phosphoglycerate and 3-phosphoglycerate. In Clostridium botulinum (strain Langeland / NCTC 10281 / Type F), this protein is 2,3-bisphosphoglycerate-independent phosphoglycerate mutase.